The following is a 421-amino-acid chain: Probable indole-3-pyruvate monooxygenase YUCCA9 (421 aa).

29-34 (GAGPSG) serves as a coordination point for FAD. 196–201 (GCGNSG) is an NADP(+) binding site.

It belongs to the FMO family. It depends on FAD as a cofactor.

The catalysed reaction is indole-3-pyruvate + NADPH + O2 + H(+) = (indol-3-yl)acetate + CO2 + NADP(+) + H2O. The protein operates within plant hormone metabolism; auxin biosynthesis. Involved in auxin biosynthesis. Belongs to the set of redundant YUCCA genes probably responsible for auxin biosynthesis in roots. The chain is Probable indole-3-pyruvate monooxygenase YUCCA9 (YUC9) from Arabidopsis thaliana (Mouse-ear cress).